The sequence spans 127 residues: MQSVDPQVVGVGKQFVEHYYGIFDSNRAGLTQIYQQQTTLTWEGKFLSGADAIVKHIVELPFQQTNRKINSIDCQQTYQPGIMITVTGTLIIDGEAKNQLKFVQVFNLASNNGSFLLINDFFRLVLD.

In terms of domain architecture, NTF2 spans 11–124 (VGKQFVEHYY…FLLINDFFRL (114 aa)).

It is found in the cytoplasm. The protein localises to the cytosol. The protein resides in the nucleus outer membrane. Its subcellular location is the nucleus. It localises to the nuclear pore complex. It is found in the nucleus inner membrane. The protein localises to the nucleoplasm. Mediates the import of GDP-bound RAN from the cytoplasm into the nucleus which is essential for the function of RAN in cargo receptor-mediated nucleocytoplasmic transport. Thereby, plays indirectly a more general role in cargo receptor-mediated nucleocytoplasmic transport. Interacts with GDP-bound RAN in the cytosol, recruits it to the nuclear pore complex via its interaction with nucleoporins and promotes its nuclear import. The polypeptide is Nuclear transport factor 2 (Dictyostelium discoideum (Social amoeba)).